The primary structure comprises 412 residues: Imidazolonepropionase (412 aa).

The Fe(3+) site is built by histidine 76 and histidine 78. Residues histidine 76 and histidine 78 each coordinate Zn(2+). Positions 85, 148, and 181 each coordinate 4-imidazolone-5-propanoate. Position 148 (tyrosine 148) interacts with N-formimidoyl-L-glutamate. Histidine 242 provides a ligand contact to Fe(3+). Zn(2+) is bound at residue histidine 242. Residue glutamate 245 participates in 4-imidazolone-5-propanoate binding. Aspartate 317 is a binding site for Fe(3+). Aspartate 317 serves as a coordination point for Zn(2+). The N-formimidoyl-L-glutamate site is built by asparagine 319 and glycine 321. 4-imidazolone-5-propanoate is bound at residue serine 322.

The protein belongs to the metallo-dependent hydrolases superfamily. HutI family. Requires Zn(2+) as cofactor. The cofactor is Fe(3+).

It is found in the cytoplasm. It catalyses the reaction 4-imidazolone-5-propanoate + H2O = N-formimidoyl-L-glutamate. The protein operates within amino-acid degradation; L-histidine degradation into L-glutamate; N-formimidoyl-L-glutamate from L-histidine: step 3/3. Catalyzes the hydrolytic cleavage of the carbon-nitrogen bond in imidazolone-5-propanoate to yield N-formimidoyl-L-glutamate. It is the third step in the universal histidine degradation pathway. This chain is Imidazolonepropionase, found in Staphylococcus aureus (strain USA300 / TCH1516).